The primary structure comprises 270 residues: Probable aquaporin NIP-type (270 aa).

Transmembrane regions (helical) follow at residues 45-65 (LIAE…SVAV) and 72-92 (VTFP…VYTV). The NPA 1 signature appears at 101–103 (NPA). The next 3 membrane-spanning stretches (helical) occupy residues 121–141 (LYII…ALLF), 160–180 (SLAI…GVAT), and 188–208 (VAGI…GPIS). The NPA 2 motif lies at 213 to 215 (NPA). A helical membrane pass occupies residues 231–251 (WVYVVGPIIGTLAGAFVYNLI).

Belongs to the MIP/aquaporin (TC 1.A.8) family. NIP (TC 1.A.8.12) subfamily. As to expression, pollen specific.

The protein resides in the membrane. Its function is as follows. Aquaporins facilitate the transport of water and small neutral solutes across cell membranes. This chain is Probable aquaporin NIP-type, found in Nicotiana alata (Winged tobacco).